The sequence spans 64 residues: MGNIRETNIKRTAFSLIENYGEVFTKDFETNKALVTKYTTIESKIIRNRVAGYVTRKVARMKVY.

This sequence belongs to the eukaryotic ribosomal protein eS17 family.

The sequence is that of Small ribosomal subunit protein eS17 from Methanosarcina mazei (strain ATCC BAA-159 / DSM 3647 / Goe1 / Go1 / JCM 11833 / OCM 88) (Methanosarcina frisia).